A 310-amino-acid chain; its full sequence is tRNA dimethylallyltransferase (310 aa).

Position 24 to 31 (24 to 31 (GPTASGKT)) interacts with ATP. 26 to 31 (TASGKT) provides a ligand contact to substrate. Positions 49–52 (DSRQ) are interaction with substrate tRNA.

This sequence belongs to the IPP transferase family. In terms of assembly, monomer. Requires Mg(2+) as cofactor.

The enzyme catalyses adenosine(37) in tRNA + dimethylallyl diphosphate = N(6)-dimethylallyladenosine(37) in tRNA + diphosphate. Its function is as follows. Catalyzes the transfer of a dimethylallyl group onto the adenine at position 37 in tRNAs that read codons beginning with uridine, leading to the formation of N6-(dimethylallyl)adenosine (i(6)A). The chain is tRNA dimethylallyltransferase from Synechococcus sp. (strain CC9311).